The chain runs to 1108 residues: DNA-directed RNA polymerase subunit beta (1108 aa).

The protein belongs to the RNA polymerase beta chain family. In plastids the minimal PEP RNA polymerase catalytic core is composed of four subunits: alpha, beta, beta', and beta''. When a (nuclear-encoded) sigma factor is associated with the core the holoenzyme is formed, which can initiate transcription.

Its subcellular location is the plastid. The protein localises to the chloroplast. The catalysed reaction is RNA(n) + a ribonucleoside 5'-triphosphate = RNA(n+1) + diphosphate. In terms of biological role, DNA-dependent RNA polymerase catalyzes the transcription of DNA into RNA using the four ribonucleoside triphosphates as substrates. This is DNA-directed RNA polymerase subunit beta from Gnetum parvifolium (Small-leaved jointfir).